We begin with the raw amino-acid sequence, 255 residues long: 4-hydroxy-tetrahydrodipicolinate reductase (255 aa).

Residues 13–18, 90–92, and 114–117 contribute to the NAD(+) site; these read GCNGKM, CTT, and SANM. The active-site Proton donor/acceptor is the histidine 147. Histidine 148 lines the (S)-2,3,4,5-tetrahydrodipicolinate pocket. Lysine 151 functions as the Proton donor in the catalytic mechanism. (S)-2,3,4,5-tetrahydrodipicolinate is bound at residue 157-158; that stretch reads GT.

This sequence belongs to the DapB family.

It is found in the cytoplasm. It carries out the reaction (S)-2,3,4,5-tetrahydrodipicolinate + NAD(+) + H2O = (2S,4S)-4-hydroxy-2,3,4,5-tetrahydrodipicolinate + NADH + H(+). It catalyses the reaction (S)-2,3,4,5-tetrahydrodipicolinate + NADP(+) + H2O = (2S,4S)-4-hydroxy-2,3,4,5-tetrahydrodipicolinate + NADPH + H(+). The protein operates within amino-acid biosynthesis; L-lysine biosynthesis via DAP pathway; (S)-tetrahydrodipicolinate from L-aspartate: step 4/4. Catalyzes the conversion of 4-hydroxy-tetrahydrodipicolinate (HTPA) to tetrahydrodipicolinate. This Clostridium tetani (strain Massachusetts / E88) protein is 4-hydroxy-tetrahydrodipicolinate reductase.